The chain runs to 874 residues: Alanine--tRNA ligase (874 aa).

Zn(2+)-binding residues include H563, H567, C664, and H668.

This sequence belongs to the class-II aminoacyl-tRNA synthetase family. Requires Zn(2+) as cofactor.

The protein resides in the cytoplasm. It catalyses the reaction tRNA(Ala) + L-alanine + ATP = L-alanyl-tRNA(Ala) + AMP + diphosphate. Its function is as follows. Catalyzes the attachment of alanine to tRNA(Ala) in a two-step reaction: alanine is first activated by ATP to form Ala-AMP and then transferred to the acceptor end of tRNA(Ala). Also edits incorrectly charged Ser-tRNA(Ala) and Gly-tRNA(Ala) via its editing domain. The polypeptide is Alanine--tRNA ligase (Methylobacillus flagellatus (strain ATCC 51484 / DSM 6875 / VKM B-1610 / KT)).